A 155-amino-acid polypeptide reads, in one-letter code: Large ribosomal subunit protein uL22 (155 aa).

The interval 109–155 (HITVIVESRPPKKAGKQGASASAARARRAQASKAATKKATDSKEGSE) is disordered. Positions 146–155 (KATDSKEGSE) are enriched in basic and acidic residues.

It belongs to the universal ribosomal protein uL22 family. As to quaternary structure, part of the 50S ribosomal subunit.

Functionally, this protein binds specifically to 23S rRNA; its binding is stimulated by other ribosomal proteins, e.g. L4, L17, and L20. It is important during the early stages of 50S assembly. It makes multiple contacts with different domains of the 23S rRNA in the assembled 50S subunit and ribosome. Its function is as follows. The globular domain of the protein is located near the polypeptide exit tunnel on the outside of the subunit, while an extended beta-hairpin is found that lines the wall of the exit tunnel in the center of the 70S ribosome. The chain is Large ribosomal subunit protein uL22 from Mycolicibacterium vanbaalenii (strain DSM 7251 / JCM 13017 / BCRC 16820 / KCTC 9966 / NRRL B-24157 / PYR-1) (Mycobacterium vanbaalenii).